Reading from the N-terminus, the 462-residue chain is Serine--tRNA ligase, cytoplasmic (462 aa).

Lys241 participates in a covalent cross-link: Glycyl lysine isopeptide (Lys-Gly) (interchain with G-Cter in URM1). Thr246 to Glu248 contacts L-serine. ATP-binding positions include Arg279–Glu281 and Val295. L-serine is bound at residue Glu302. Residues Lys350 and Lys351 each participate in a glycyl lysine isopeptide (Lys-Gly) (interchain with G-Cter in URM1) cross-link. An ATP-binding site is contributed by Glu366–Ser369. A cysteine persulfide mark is found at Cys373 and Cys400. Thr404 is a binding site for L-serine.

The protein belongs to the class-II aminoacyl-tRNA synthetase family. Type-1 seryl-tRNA synthetase subfamily. As to quaternary structure, homodimer; the tRNA molecule probably binds across the dimer. Interacts with ABP140; interaction is required for the tRNA N(3)-methylcytidine methyltransferase activity of ABP140. Conjugated to URM1, a ubiquitin-like protein, in response to oxidative stresses. The attachment of URM1 to lysine residues exclusively depends on the presence of a peroxidatic cysteine in the target protein, with low specificity for the particular residue, motif, or structural context at which urmylation can occur. The URM1-conjugation reaction is mechanistically and directly coupled to the process of cysteine persulfidation, transfering the sulfur atom of the URM1 thiocarboxyl group to redox-active cysteine residues in the target protein if it is exposed to oxidative conditions. Post-translationally, persulfidated on specific redox-active cysteine residues. Persulfidation (also called protein S-sulfhydration) may provide a molecular mechanism that enables cells to protect vulnerable cysteine residues from reactive oxygen species (ROS) under stress conditions.

It is found in the cytoplasm. Its subcellular location is the cytosol. The catalysed reaction is tRNA(Ser) + L-serine + ATP = L-seryl-tRNA(Ser) + AMP + diphosphate + H(+). In terms of biological role, catalyzes the attachment of serine to tRNA(Ser) in a two-step reaction: serine is first activated by ATP to form Ser-AMP and then transferred to the acceptor end of tRNA(Ser). The chain is Serine--tRNA ligase, cytoplasmic (SES1) from Saccharomyces cerevisiae (strain ATCC 204508 / S288c) (Baker's yeast).